Here is a 647-residue protein sequence, read N- to C-terminus: Indolepyruvate oxidoreductase subunit IorA (647 aa).

4Fe-4S ferredoxin-type domains are found at residues 585-614 and 616-645; these read PIYHVVEDKCTGCKICINAYGCPAIYWDPE and KKAKVDPTMCWGCGGCAQVCPFDAFEPMKE. Residues Cys-594, Cys-597, Cys-600, Cys-606, Cys-625, Cys-628, Cys-631, and Cys-635 each coordinate [4Fe-4S] cluster.

As to quaternary structure, heterodimer of the IorA and IorB subunits. [4Fe-4S] cluster is required as a cofactor.

It carries out the reaction indole-3-pyruvate + 2 oxidized [2Fe-2S]-[ferredoxin] + CoA = (indol-3-yl)acetyl-CoA + 2 reduced [2Fe-2S]-[ferredoxin] + CO2 + H(+). Catalyzes the ferredoxin-dependent oxidative decarboxylation of arylpyruvates. The polypeptide is Indolepyruvate oxidoreductase subunit IorA (iorA) (Thermococcus kodakarensis (strain ATCC BAA-918 / JCM 12380 / KOD1) (Pyrococcus kodakaraensis (strain KOD1))).